Consider the following 161-residue polypeptide: Nucleotide-binding protein Plav_2177 (161 aa).

It belongs to the YajQ family.

Functionally, nucleotide-binding protein. The protein is Nucleotide-binding protein Plav_2177 of Parvibaculum lavamentivorans (strain DS-1 / DSM 13023 / NCIMB 13966).